The sequence spans 312 residues: Ribosomal protein L11 methyltransferase (312 aa).

The S-adenosyl-L-methionine site is built by Thr163, Gly184, Asp206, and Asn248.

It belongs to the methyltransferase superfamily. PrmA family.

Its subcellular location is the cytoplasm. It carries out the reaction L-lysyl-[protein] + 3 S-adenosyl-L-methionine = N(6),N(6),N(6)-trimethyl-L-lysyl-[protein] + 3 S-adenosyl-L-homocysteine + 3 H(+). Methylates ribosomal protein L11. The sequence is that of Ribosomal protein L11 methyltransferase from Clostridium botulinum (strain Loch Maree / Type A3).